Consider the following 118-residue polypeptide: Melanoma antigen recognized by T-cells 1 (118 aa).

The chain crosses the membrane as a helical span at residues 27-47; the sequence is AAGIGILTVILGVLLLIGCWY. Residues 48–118 lie on the Cytoplasmic side of the membrane; the sequence is CRRRNGYRAL…AEQSPPPYSP (71 aa). Residues 78 to 118 form a disordered region; the sequence is GFDHRDSKVSLQEKNCEPVVPNAPPAYEKLSAEQSPPPYSP. The residue at position 108 (Ser108) is a Phosphoserine.

As to quaternary structure, interacts with PMEL. Interacts with GPR143. In terms of processing, acylated. As to expression, expression is restricted to melanoma and melanocyte cell lines and retina.

The protein resides in the endoplasmic reticulum membrane. It localises to the golgi apparatus. It is found in the trans-Golgi network membrane. The protein localises to the melanosome. Functionally, involved in melanosome biogenesis by ensuring the stability of GPR143. Plays a vital role in the expression, stability, trafficking, and processing of melanocyte protein PMEL, which is critical to the formation of stage II melanosomes. This Homo sapiens (Human) protein is Melanoma antigen recognized by T-cells 1 (MLANA).